We begin with the raw amino-acid sequence, 806 residues long: Facilitated trehalose transporter Tret1 (806 aa).

2 disordered regions span residues M1–T34 and L48–Q138. Topologically, residues M1–P339 are cytoplasmic. A compositionally biased stretch (low complexity) spans G25 to T34. The chain crosses the membrane as a helical span at residues I340–G360. The Extracellular segment spans residues F361–S389. An N-linked (GlcNAc...) asparagine glycan is attached at N377. The helical transmembrane segment at W390–I410 threads the bilayer. Residues E411–T424 are Cytoplasmic-facing. Residues P425–G445 form a helical membrane-spanning segment. Topologically, residues R446–A447 are extracellular. The helical transmembrane segment at L448–V468 threads the bilayer. Topologically, residues Q469 to R473 are cytoplasmic. A helical membrane pass occupies residues G474 to A494. Residues G495 to S501 lie on the Extracellular side of the membrane. A helical transmembrane segment spans residues G502 to P522. The Cytoplasmic segment spans residues E523 to P585. The helical transmembrane segment at L586 to F606 threads the bilayer. Residues Y607–N622 are Extracellular-facing. A helical transmembrane segment spans residues L623–I643. Residues D644–K649 lie on the Cytoplasmic side of the membrane. Residues M650–F670 form a helical membrane-spanning segment. The Extracellular segment spans residues Y671 to Q681. The helical transmembrane segment at V682–G702 threads the bilayer. Topologically, residues P703–S723 are cytoplasmic. The helical transmembrane segment at V724–I744 threads the bilayer. At N745 to H750 the chain is on the extracellular side. Residues G751–V771 traverse the membrane as a helical segment. The Cytoplasmic segment spans residues P772–M806.

This sequence belongs to the major facilitator superfamily. Sugar transporter (TC 2.A.1.1) family. Trehalose transporter subfamily.

The protein resides in the cell membrane. Its function is as follows. High-capacity facilitative transporter for trehalose. Does not transport maltose, sucrose or lactose. Mediates the bidirectional transfer of trehalose. Responsible for the transport of trehalose synthesized in the fat body and the incorporation of trehalose into other tissues that require a carbon source, thereby regulating trehalose levels in the hemolymph. This Aedes aegypti (Yellowfever mosquito) protein is Facilitated trehalose transporter Tret1.